Consider the following 496-residue polypeptide: Cytochrome P450 71B1 (496 aa).

Cys436 is a heme binding site.

This sequence belongs to the cytochrome P450 family. Heme is required as a cofactor.

This Thlaspi arvense (Field penny-cress) protein is Cytochrome P450 71B1 (CYP71B1).